The chain runs to 111 residues: MAVKIRLARGGAKKRPFYRVVIANATAPRDGDFLEKVGTYNPMLASDNSERVILKKDRIEYWLGTGAKPTERVAKFIEKAGVTLPKKVKKEMEVKAKNRKVRPSKKQSKES.

This sequence belongs to the bacterial ribosomal protein bS16 family.

This chain is Small ribosomal subunit protein bS16, found in Rickettsia prowazekii (strain Madrid E).